The sequence spans 111 residues: Notch-regulated ankyrin repeat-containing protein B (111 aa).

ANK repeat units follow at residues 47–76 and 80–109; these read EGQTALHQSVIDGNLELVKLLVKFGADTRL and DGWSALHIAAFGGHQDIVLYLITRAKYSSS.

This sequence belongs to the NRARP family.

Its function is as follows. Regulates independently canonical Wnt and Notch signaling by modulating LEF1 and Notch protein turnover. Stabilizes LEF1, a pivotal transcription factor in the Wnt signaling cascade, by blocking its ubiquitination. Involved in angiogenesis; involved in intersegmental vessel patterning during development. This chain is Notch-regulated ankyrin repeat-containing protein B (nrarpb), found in Danio rerio (Zebrafish).